Here is a 106-residue protein sequence, read N- to C-terminus: Integration host factor subunit alpha (106 aa).

It belongs to the bacterial histone-like protein family. As to quaternary structure, heterodimer of an alpha and a beta chain.

Its function is as follows. This protein is one of the two subunits of integration host factor, a specific DNA-binding protein that functions in genetic recombination as well as in transcriptional and translational control. The sequence is that of Integration host factor subunit alpha from Nitrobacter winogradskyi (strain ATCC 25391 / DSM 10237 / CIP 104748 / NCIMB 11846 / Nb-255).